The chain runs to 247 residues: Small ribosomal subunit protein uS2 (247 aa).

The protein belongs to the universal ribosomal protein uS2 family.

The protein is Small ribosomal subunit protein uS2 of Halorhodospira halophila (strain DSM 244 / SL1) (Ectothiorhodospira halophila (strain DSM 244 / SL1)).